The sequence spans 65 residues: Sec-independent protein translocase protein TatA (65 aa).

The chain crosses the membrane as a helical span at residues 1-21; that stretch reads MFGLGGQELVLILLIILLLFG.

It belongs to the TatA/E family. In terms of assembly, forms a complex with TatC.

The protein localises to the cell inner membrane. Part of the twin-arginine translocation (Tat) system that transports large folded proteins containing a characteristic twin-arginine motif in their signal peptide across membranes. TatA could form the protein-conducting channel of the Tat system. The protein is Sec-independent protein translocase protein TatA of Chlorobium phaeobacteroides (strain DSM 266 / SMG 266 / 2430).